The sequence spans 123 residues: Thioredoxin domain-containing protein 17 (123 aa).

Ala-2 carries the post-translational modification N-acetylalanine. One can recognise a Thioredoxin domain in the interval 41–123 (SWCPDCVEAE…SLVEMIFSED (83 aa)). Residues Cys-43 and Cys-46 each act as nucleophile in the active site. The cysteines at positions 43 and 46 are disulfide-linked.

This sequence belongs to the thioredoxin family. In terms of assembly, interacts with TRXR1 and DYNLL1/DNCL1. Post-translationally, the oxidized protein is reduced by TRXR1.

It is found in the cytoplasm. Disulfide reductase. May participate in various redox reactions through the reversible oxidation of its active center dithiol to a disulfide and catalyze dithiol-disulfide exchange reactions. Modulates TNF-alpha signaling and NF-kappa-B activation. Has peroxidase activity and may contribute to the elimination of cellular hydrogen peroxide. This Mus musculus (Mouse) protein is Thioredoxin domain-containing protein 17 (Txndc17).